The sequence spans 133 residues: Interleukin-4 (133 aa).

An N-terminal signal peptide occupies residues 1–24; the sequence is MGLTSQLIPMLVCLLACTSNFVHG. Intrachain disulfides connect Cys-27-Cys-133, Cys-48-Cys-85, and Cys-70-Cys-105. Residues Asn-62, Asn-96, and Asn-102 are each glycosylated (N-linked (GlcNAc...) asparagine).

It belongs to the IL-4/IL-13 family.

It is found in the secreted. Functionally, participates in at least several B-cell activation processes as well as of other cell types. It is a costimulator of DNA-synthesis. It induces the expression of class II MHC molecules on resting B-cells. It enhances both secretion and cell surface expression of IgE and IgG1. It also regulates the expression of the low affinity Fc receptor for IgE (CD23) on both lymphocytes and monocytes. Positively regulates IL31RA expression in macrophages. Stimulates autophagy in dendritic cells by interfering with mTORC1 signaling and through the induction of RUFY4. The sequence is that of Interleukin-4 (IL4) from Tursiops truncatus (Atlantic bottle-nosed dolphin).